The primary structure comprises 254 residues: Trans-aconitate 2-methyltransferase (254 aa).

It belongs to the methyltransferase superfamily. Tam family.

It is found in the cytoplasm. The catalysed reaction is trans-aconitate + S-adenosyl-L-methionine = (E)-3-(methoxycarbonyl)pent-2-enedioate + S-adenosyl-L-homocysteine. Its function is as follows. Catalyzes the S-adenosylmethionine monomethyl esterification of trans-aconitate. This chain is Trans-aconitate 2-methyltransferase, found in Rhodococcus jostii (strain RHA1).